The sequence spans 98 residues: Large ribosomal subunit protein bL27 (98 aa).

Residues 1-10 constitute a propeptide that is removed on maturation; that stretch reads MELKMNLQLF. Residues 11 to 30 form a disordered region; that stretch reads AQKKGTGSSKNGRDSISKRL.

It belongs to the bacterial ribosomal protein bL27 family. The N-terminus is cleaved by ribosomal processing cysteine protease Prp.

This is Large ribosomal subunit protein bL27 from Natranaerobius thermophilus (strain ATCC BAA-1301 / DSM 18059 / JW/NM-WN-LF).